Consider the following 432-residue polypeptide: Argininosuccinate lyase (432 aa).

The protein belongs to the lyase 1 family. Argininosuccinate lyase subfamily.

It localises to the cytoplasm. It carries out the reaction 2-(N(omega)-L-arginino)succinate = fumarate + L-arginine. It participates in amino-acid biosynthesis; L-arginine biosynthesis; L-arginine from L-ornithine and carbamoyl phosphate: step 3/3. The polypeptide is Argininosuccinate lyase (Xanthomonas euvesicatoria pv. vesicatoria (strain 85-10) (Xanthomonas campestris pv. vesicatoria)).